We begin with the raw amino-acid sequence, 642 residues long: Threonine--tRNA ligase (642 aa).

Positions 1-61 (MPVITLPDGS…ETDSDLSIIT (61 aa)) constitute a TGS domain. Residues 243–534 (DHRKIGKQLD…LIEEYAGKFP (292 aa)) form a catalytic region. Residues Cys334, His385, and His511 each contribute to the Zn(2+) site.

It belongs to the class-II aminoacyl-tRNA synthetase family. In terms of assembly, homodimer. The cofactor is Zn(2+).

The protein resides in the cytoplasm. The enzyme catalyses tRNA(Thr) + L-threonine + ATP = L-threonyl-tRNA(Thr) + AMP + diphosphate + H(+). Functionally, catalyzes the attachment of threonine to tRNA(Thr) in a two-step reaction: L-threonine is first activated by ATP to form Thr-AMP and then transferred to the acceptor end of tRNA(Thr). Also edits incorrectly charged L-seryl-tRNA(Thr). The sequence is that of Threonine--tRNA ligase from Shewanella pealeana (strain ATCC 700345 / ANG-SQ1).